We begin with the raw amino-acid sequence, 274 residues long: Glucosamine-6-phosphate deaminase (274 aa).

The Proton acceptor; for enolization step role is filled by Asp71. The active-site For ring-opening step is the Asp140. The active-site Proton acceptor; for ring-opening step is the His142. Catalysis depends on Glu147, which acts as the For ring-opening step.

The protein belongs to the glucosamine/galactosamine-6-phosphate isomerase family. NagB subfamily.

The catalysed reaction is alpha-D-glucosamine 6-phosphate + H2O = beta-D-fructose 6-phosphate + NH4(+). The protein operates within amino-sugar metabolism; N-acetylneuraminate degradation; D-fructose 6-phosphate from N-acetylneuraminate: step 5/5. Catalyzes the reversible isomerization-deamination of glucosamine 6-phosphate (GlcN6P) to form fructose 6-phosphate (Fru6P) and ammonium ion. The protein is Glucosamine-6-phosphate deaminase of Fusobacterium nucleatum subsp. nucleatum (strain ATCC 25586 / DSM 15643 / BCRC 10681 / CIP 101130 / JCM 8532 / KCTC 2640 / LMG 13131 / VPI 4355).